A 281-amino-acid chain; its full sequence is 2-dehydro-3-deoxyphosphooctonate aldolase (281 aa).

It belongs to the KdsA family.

The protein resides in the cytoplasm. It carries out the reaction D-arabinose 5-phosphate + phosphoenolpyruvate + H2O = 3-deoxy-alpha-D-manno-2-octulosonate-8-phosphate + phosphate. Its pathway is carbohydrate biosynthesis; 3-deoxy-D-manno-octulosonate biosynthesis; 3-deoxy-D-manno-octulosonate from D-ribulose 5-phosphate: step 2/3. The protein operates within bacterial outer membrane biogenesis; lipopolysaccharide biosynthesis. The protein is 2-dehydro-3-deoxyphosphooctonate aldolase of Pseudomonas fluorescens (strain Pf0-1).